A 689-amino-acid chain; its full sequence is DNA ligase (689 aa).

Residues 40-44, 89-90, and Glu121 each bind NAD(+); these read DAEYD and SL. Lys123 (N6-AMP-lysine intermediate) is an active-site residue. NAD(+)-binding residues include Arg144, Glu179, Lys295, and Lys319. The Zn(2+) site is built by Cys413, Cys416, Cys431, and Cys437. One can recognise a BRCT domain in the interval 610-689; that stretch reads REQSSLTGKI…AEWLTLVRDI (80 aa).

This sequence belongs to the NAD-dependent DNA ligase family. LigA subfamily. The cofactor is Mg(2+). Mn(2+) is required as a cofactor.

The enzyme catalyses NAD(+) + (deoxyribonucleotide)n-3'-hydroxyl + 5'-phospho-(deoxyribonucleotide)m = (deoxyribonucleotide)n+m + AMP + beta-nicotinamide D-nucleotide.. Its function is as follows. DNA ligase that catalyzes the formation of phosphodiester linkages between 5'-phosphoryl and 3'-hydroxyl groups in double-stranded DNA using NAD as a coenzyme and as the energy source for the reaction. It is essential for DNA replication and repair of damaged DNA. In Rickettsia bellii (strain OSU 85-389), this protein is DNA ligase.